A 964-amino-acid polypeptide reads, in one-letter code: Glycine dehydrogenase (decarboxylating) (964 aa).

K711 is modified (N6-(pyridoxal phosphate)lysine).

This sequence belongs to the GcvP family. As to quaternary structure, the glycine cleavage system is composed of four proteins: P, T, L and H. The cofactor is pyridoxal 5'-phosphate.

It catalyses the reaction N(6)-[(R)-lipoyl]-L-lysyl-[glycine-cleavage complex H protein] + glycine + H(+) = N(6)-[(R)-S(8)-aminomethyldihydrolipoyl]-L-lysyl-[glycine-cleavage complex H protein] + CO2. The glycine cleavage system catalyzes the degradation of glycine. The P protein binds the alpha-amino group of glycine through its pyridoxal phosphate cofactor; CO(2) is released and the remaining methylamine moiety is then transferred to the lipoamide cofactor of the H protein. In Prochlorococcus marinus (strain SARG / CCMP1375 / SS120), this protein is Glycine dehydrogenase (decarboxylating).